A 786-amino-acid polypeptide reads, in one-letter code: Endonuclease MutS2 (786 aa).

Gly-332–Thr-339 provides a ligand contact to ATP. In terms of domain architecture, Smr spans Ile-711–Lys-786.

This sequence belongs to the DNA mismatch repair MutS family. MutS2 subfamily. Homodimer. Binds to stalled ribosomes, contacting rRNA.

Its function is as follows. Endonuclease that is involved in the suppression of homologous recombination and thus may have a key role in the control of bacterial genetic diversity. Functionally, acts as a ribosome collision sensor, splitting the ribosome into its 2 subunits. Detects stalled/collided 70S ribosomes which it binds and splits by an ATP-hydrolysis driven conformational change. Acts upstream of the ribosome quality control system (RQC), a ribosome-associated complex that mediates the extraction of incompletely synthesized nascent chains from stalled ribosomes and their subsequent degradation. Probably generates substrates for RQC. The protein is Endonuclease MutS2 of Clostridium perfringens (strain ATCC 13124 / DSM 756 / JCM 1290 / NCIMB 6125 / NCTC 8237 / Type A).